The following is a 21-amino-acid chain: DINGGGATLPQALXQITGVIT.

It localises to the secreted. Its function is as follows. Plays a role in adherence of C.albicans to buccal epithelial cells, and in biofilm formation. The polypeptide is Complement receptor 3-related protein (Candida albicans (Yeast)).